The following is a 198-amino-acid chain: MVSTEIEALVQQLARLPGLGPRSARRAVLHLMKKRESAFAPLLAALQTVSERLVTCTTCGNIDTHDPCAICADPRRDARSLCVVEEVSDLWALDKSRLFPGKYHVLGGRLSALEGVRPQDLSIDALVTRVAAGGIDEVVLAMNATLEGQTTAHYLAERLEGYPVRLTQLAHGLPVGGELDYLDEGTLAQALRARRPVG.

Residues 56–71 (CTTCGNIDTHDPCAIC) form a C4-type zinc finger. The Toprim domain maps to 79 to 174 (RSLCVVEEVS…RLTQLAHGLP (96 aa)).

The protein belongs to the RecR family.

Its function is as follows. May play a role in DNA repair. It seems to be involved in an RecBC-independent recombinational process of DNA repair. It may act with RecF and RecO. The sequence is that of Recombination protein RecR from Sphingopyxis alaskensis (strain DSM 13593 / LMG 18877 / RB2256) (Sphingomonas alaskensis).